A 457-amino-acid chain; its full sequence is Multidrug resistance protein MdtK (457 aa).

12 consecutive transmembrane segments (helical) span residues 11-31 (LLAL…MGFV), 53-73 (IWLP…PVIA), 93-113 (WLAG…GYII), 127-147 (AVGY…FQVA), 160-180 (GMVM…IFIY), 189-209 (GGVG…LAMV), 243-263 (LPIA…ALLV), 276-296 (IALN…AAVT), 314-334 (AART…IFTV), 350-370 (VVTL…SDSI), 387-407 (IFYI…YILA), and 418-438 (PAGF…MMML).

The protein belongs to the multi antimicrobial extrusion (MATE) (TC 2.A.66.1) family. MdtK subfamily.

It localises to the cell inner membrane. Functionally, multidrug efflux pump that functions probably as a Na(+)/drug antiporter. The protein is Multidrug resistance protein MdtK of Escherichia coli O127:H6 (strain E2348/69 / EPEC).